Reading from the N-terminus, the 319-residue chain is NADH-cytochrome b5 reductase 2 (319 aa).

A helical membrane pass occupies residues 30 to 46 (LAPVYLTVGLAGLGVGL). The 105-residue stretch at 69 to 173 (QGWVDLKLSE…KGPLPKYPWE (105 aa)) folds into the FAD-binding FR-type domain. FAD is bound at residue 176–211 (KHQHICLIAGGTGITPMYQLARHIFKNPEDKTKVTL).

This sequence belongs to the flavoprotein pyridine nucleotide cytochrome reductase family. FAD is required as a cofactor.

Its subcellular location is the mitochondrion outer membrane. It carries out the reaction 2 Fe(III)-[cytochrome b5] + NADH = 2 Fe(II)-[cytochrome b5] + NAD(+) + H(+). May mediate the reduction of outer membrane cytochrome b5. This is NADH-cytochrome b5 reductase 2 (mcr1) from Aspergillus terreus (strain NIH 2624 / FGSC A1156).